A 300-amino-acid polypeptide reads, in one-letter code: L-arabinolactonase (300 aa).

Positions 22, 156, and 205 each coordinate a divalent metal cation.

The protein belongs to the SMP-30/CGR1 family. It depends on a divalent metal cation as a cofactor.

It carries out the reaction L-arabinono-1,4-lactone + H2O = L-arabinonate + H(+). In terms of biological role, catalyzes the cleavage of L-arabino-gamma-lactone to L-arabonate. Is involved in a degradation pathway of L-arabinose that allows A.brasilense to grow on L-arabinose as a sole carbon source. Can also use D-galactono-1,4-lactone as substrate in vitro; however, the enzyme is probably not involved in the metabolism of D-galactose in vivo. In Azospirillum brasilense, this protein is L-arabinolactonase (araB).